Here is a 352-residue protein sequence, read N- to C-terminus: Large ribosomal subunit protein uL10 (352 aa).

The segment covering D286–D297 has biased composition (acidic residues). Residues D286–G352 form a disordered region. Over residues D299–D310 the composition is skewed to low complexity. Positions E324–G340 are enriched in acidic residues. Over residues G343–G352 the composition is skewed to gly residues.

The protein belongs to the universal ribosomal protein uL10 family. As to quaternary structure, part of the 50S ribosomal subunit. Forms part of the ribosomal stalk which helps the ribosome interact with GTP-bound translation factors. Forms a heptameric L10(L12)2(L12)2(L12)2 complex, where L10 forms an elongated spine to which the L12 dimers bind in a sequential fashion.

In terms of biological role, forms part of the ribosomal stalk, playing a central role in the interaction of the ribosome with GTP-bound translation factors. In Halobacterium salinarum (strain ATCC 700922 / JCM 11081 / NRC-1) (Halobacterium halobium), this protein is Large ribosomal subunit protein uL10.